The primary structure comprises 684 residues: Poly(A) RNA polymerase cid14 (684 aa).

Disordered stretches follow at residues 1 to 52 (MGKK…DAYD), 64 to 127 (DQEE…KRGE), and 161 to 219 (WNSD…QAYE). Basic and acidic residues-rich tracts occupy residues 19–35 (ERTEPLPRRIFKNDKPS), 73–91 (GSKKSRNDNDSEGIRDKGG), 108–127 (DPLEPLEKPDLPEEAIKRGE), 171–186 (SNDKSKNNESLKKSSK), and 199–210 (FFHEANEKSDSN). Residues Asp298 and Asp300 each coordinate Mg(2+). The ATP site is built by Gly364, Lys389, Ser407, Tyr408, Asn492, and Lys496. A PAP-associated domain is found at 434–492 (NFGVLLLEFLELYGKQFYYDAVGIAVHNGGFYFSKKKMGWLKPNQPYLLSIQDPVDFQN). The interval 623–684 (GHENFQKQAL…SRAKKIRKRF (62 aa)) is disordered. Residues 628–655 (QKQALTSTGEQSSSNSRANPSKLFNISS) show a composition bias toward polar residues. A compositionally biased stretch (acidic residues) spans 656-672 (DDSEDEVPIIEDTTASD).

The protein belongs to the DNA polymerase type-B-like family. In terms of assembly, heterooligomer. Component of the TRAMP complex composed of at least cid14, mtr4, and air1. Mg(2+) serves as cofactor. It depends on Mn(2+) as a cofactor.

It localises to the nucleus. The protein resides in the nucleolus. It carries out the reaction RNA(n) + ATP = RNA(n)-3'-adenine ribonucleotide + diphosphate. Its function is as follows. Required for 3' polyadenylation of the 5.8S and 25S rRNAs as a prelude to their degradation in the exosome. Involved in the nucleolar organization to ensure faithful chromosome segregation during mitosis. This Schizosaccharomyces pombe (strain 972 / ATCC 24843) (Fission yeast) protein is Poly(A) RNA polymerase cid14 (cid14).